The chain runs to 188 residues: Phosphoribosylglycinamide formyltransferase (188 aa).

A N(1)-(5-phospho-beta-D-ribosyl)glycinamide-binding site is contributed by Gly12–Asn14. Residues Lys66, Met91–Ile94, and Asn108 each bind (6R)-10-formyltetrahydrofolate. His110 acts as the Proton donor in catalysis.

The protein belongs to the GART family.

The catalysed reaction is N(1)-(5-phospho-beta-D-ribosyl)glycinamide + (6R)-10-formyltetrahydrofolate = N(2)-formyl-N(1)-(5-phospho-beta-D-ribosyl)glycinamide + (6S)-5,6,7,8-tetrahydrofolate + H(+). It participates in purine metabolism; IMP biosynthesis via de novo pathway; N(2)-formyl-N(1)-(5-phospho-D-ribosyl)glycinamide from N(1)-(5-phospho-D-ribosyl)glycinamide (10-formyl THF route): step 1/1. In terms of biological role, catalyzes the transfer of a formyl group from 10-formyltetrahydrofolate to 5-phospho-ribosyl-glycinamide (GAR), producing 5-phospho-ribosyl-N-formylglycinamide (FGAR) and tetrahydrofolate. In Staphylococcus aureus (strain MSSA476), this protein is Phosphoribosylglycinamide formyltransferase.